A 394-amino-acid chain; its full sequence is Benzoate membrane transport protein (394 aa).

The next 11 membrane-spanning stretches (helical) occupy residues 16 to 36 (ATIA…IIFF), 49 to 69 (MISW…FLSI), 74 to 94 (PVVT…FPNI), 99 to 119 (AVAA…TGYF), 139 to 161 (LFQF…FSML), 176 to 196 (MLWV…MNPV), 220 to 240 (LALP…MAIL), 252 to 272 (IIAA…ITIV), 301 to 321 (GLFY…FSLL), 325 to 345 (LVAA…IKIA), and 368 to 388 (FLGL…YFIL).

The protein localises to the cell membrane. Its function is as follows. Probably involved in the transport of benzoate. The protein is Benzoate membrane transport protein (benE) of Acinetobacter baylyi (strain ATCC 33305 / BD413 / ADP1).